Consider the following 189-residue polypeptide: Chitin synthase 2 (189 aa).

The protein belongs to the chitin synthase family. Class II subfamily.

Its subcellular location is the cell membrane. The catalysed reaction is [(1-&gt;4)-N-acetyl-beta-D-glucosaminyl](n) + UDP-N-acetyl-alpha-D-glucosamine = [(1-&gt;4)-N-acetyl-beta-D-glucosaminyl](n+1) + UDP + H(+). Functionally, polymerizes chitin, a structural polymer of the cell wall and septum, by transferring the sugar moiety of UDP-GlcNAc to the non-reducing end of the growing chitin polymer. In Aspergillus niger, this protein is Chitin synthase 2 (chs2).